We begin with the raw amino-acid sequence, 330 residues long: GMP reductase (330 aa).

Catalysis depends on Cys180, which acts as the Thioimidate intermediate. 209 to 232 (LIADGGIRHNGDIAKSVRFGASMV) lines the NADP(+) pocket.

The protein belongs to the IMPDH/GMPR family. GuaC type 2 subfamily.

It catalyses the reaction IMP + NH4(+) + NADP(+) = GMP + NADPH + 2 H(+). Functionally, catalyzes the irreversible NADPH-dependent deamination of GMP to IMP. It functions in the conversion of nucleobase, nucleoside and nucleotide derivatives of G to A nucleotides, and in maintaining the intracellular balance of A and G nucleotides. The polypeptide is GMP reductase (Lactobacillus delbrueckii subsp. bulgaricus (strain ATCC 11842 / DSM 20081 / BCRC 10696 / JCM 1002 / NBRC 13953 / NCIMB 11778 / NCTC 12712 / WDCM 00102 / Lb 14)).